The chain runs to 70 residues: UPF0270 protein VP2791 (70 aa).

The protein belongs to the UPF0270 family.

The sequence is that of UPF0270 protein VP2791 from Vibrio parahaemolyticus serotype O3:K6 (strain RIMD 2210633).